The chain runs to 188 residues: HGPRTase-like protein (188 aa).

The protein belongs to the purine/pyrimidine phosphoribosyltransferase family. Archaeal HPRT subfamily.

In terms of biological role, may catalyze a purine salvage reaction, the substrate is unknown. The protein is HGPRTase-like protein of Halobacterium salinarum (strain ATCC 29341 / DSM 671 / R1).